The chain runs to 212 residues: Ropporin-1 (212 aa).

The RIIa domain maps to 12–43 (PELPELLKQFTKAAIRSQPQDLIQWAAEYFGA). Serine 56 carries the post-translational modification Phosphoserine. Residues 209-212 (VRLE) are interaction with RHPN1.

The protein belongs to the ropporin family. Homodimer. Interacts with AKAP3. May interact with SPA17. Interacts with RHPN1. Interacts with FSCB; the interaction increases upon spermatozoa capacitation conditions. Interacts with CFAP61. In terms of processing, sumoylated, sumoylation decreases upon spermatozoa capacitation conditions.

It is found in the cell projection. The protein resides in the cilium. It localises to the flagellum. Important for male fertility. With ROPN1L, involved in fibrous sheath integrity and sperm motility, plays a role in PKA-dependent signaling processes required for spermatozoa capacitation. The polypeptide is Ropporin-1 (ROPN1) (Bos taurus (Bovine)).